A 232-amino-acid chain; its full sequence is Ribonuclease 3 (232 aa).

Positions 2–135 (IKALEDDLSQ…FIGALYLDQG (134 aa)) constitute an RNase III domain. Glu48 provides a ligand contact to Mg(2+). Asp52 is an active-site residue. 2 residues coordinate Mg(2+): Asp121 and Glu124. The active site involves Glu124. The DRBM domain occupies 161–230 (DHKSELQELL…ANQALQLLRR (70 aa)).

The protein belongs to the ribonuclease III family. In terms of assembly, homodimer. It depends on Mg(2+) as a cofactor.

It is found in the cytoplasm. It carries out the reaction Endonucleolytic cleavage to 5'-phosphomonoester.. Functionally, digests double-stranded RNA. Involved in the processing of primary rRNA transcript to yield the immediate precursors to the large and small rRNAs (23S and 16S). Processes some mRNAs, and tRNAs when they are encoded in the rRNA operon. Processes pre-crRNA and tracrRNA of type II CRISPR loci if present in the organism. This Pediococcus pentosaceus (strain ATCC 25745 / CCUG 21536 / LMG 10740 / 183-1w) protein is Ribonuclease 3.